The primary structure comprises 330 residues: Ferredoxin--NADP reductase (330 aa).

The FAD site is built by E35, Q43, Y48, V90, F123, D285, and T326.

The protein belongs to the ferredoxin--NADP reductase type 2 family. As to quaternary structure, homodimer. Requires FAD as cofactor.

The enzyme catalyses 2 reduced [2Fe-2S]-[ferredoxin] + NADP(+) + H(+) = 2 oxidized [2Fe-2S]-[ferredoxin] + NADPH. This Streptococcus agalactiae serotype Ia (strain ATCC 27591 / A909 / CDC SS700) protein is Ferredoxin--NADP reductase.